A 275-amino-acid chain; its full sequence is Small ribosomal subunit protein uS3 (275 aa).

A KH type-2 domain is found at 39–107; that stretch reads VRIYLKKKLK…PVHVNIEEIR (69 aa). Positions 216-275 are disordered; the sequence is AAATSAEPAAEEKKTRRAPSKTAARKPAAGTDKPLVAAKPAVKRVRKVETPAADTQKSGE.

The protein belongs to the universal ribosomal protein uS3 family. Part of the 30S ribosomal subunit. Forms a tight complex with proteins S10 and S14.

In terms of biological role, binds the lower part of the 30S subunit head. Binds mRNA in the 70S ribosome, positioning it for translation. The sequence is that of Small ribosomal subunit protein uS3 from Polynucleobacter asymbioticus (strain DSM 18221 / CIP 109841 / QLW-P1DMWA-1) (Polynucleobacter necessarius subsp. asymbioticus).